The following is a 279-amino-acid chain: Oxygen-dependent coproporphyrinogen-III oxidase (279 aa).

Ser-102 serves as a coordination point for substrate. 2 residues coordinate a divalent metal cation: His-106 and His-116. Residue His-116 is the Proton donor of the active site. Residue 118-120 (NTR) participates in substrate binding. His-149 and His-179 together coordinate a divalent metal cation. Residues 244 to 279 (YVEFNLLYDRGTKFGLMTDGNIEAILMSLPPVVKFN) form an important for dimerization region.

It belongs to the aerobic coproporphyrinogen-III oxidase family. As to quaternary structure, homodimer. A divalent metal cation serves as cofactor.

The protein resides in the cytoplasm. It carries out the reaction coproporphyrinogen III + O2 + 2 H(+) = protoporphyrinogen IX + 2 CO2 + 2 H2O. It participates in porphyrin-containing compound metabolism; protoporphyrin-IX biosynthesis; protoporphyrinogen-IX from coproporphyrinogen-III (O2 route): step 1/1. Functionally, involved in the heme biosynthesis. Catalyzes the aerobic oxidative decarboxylation of propionate groups of rings A and B of coproporphyrinogen-III to yield the vinyl groups in protoporphyrinogen-IX. The protein is Oxygen-dependent coproporphyrinogen-III oxidase of Rickettsia typhi (strain ATCC VR-144 / Wilmington).